Reading from the N-terminus, the 998-residue chain is Mis18-binding protein 1 (998 aa).

K7 is covalently cross-linked (Glycyl lysine isopeptide (Lys-Gly) (interchain with G-Cter in SUMO2)). S9, S109, and S134 each carry phosphoserine. The disordered stretch occupies residues Q122–K153. Residues E142–K153 are compositionally biased toward basic and acidic residues. Phosphoserine occurs at positions 169 and 258. An SANTA domain is found at V336–E422. 2 disordered regions span residues K438–K460 and D476–R502. Over residues P488–S497 the composition is skewed to polar residues. T516 and T578 each carry phosphothreonine. S638 and S639 each carry phosphoserine. The disordered stretch occupies residues S638–N660. Over residues V644–N660 the composition is skewed to basic and acidic residues. T688 carries the post-translational modification Phosphothreonine. K707 participates in a covalent cross-link: Glycyl lysine isopeptide (Lys-Gly) (interchain with G-Cter in SUMO2). S726 carries the post-translational modification Phosphoserine. Positions T741–G796 constitute an SANT domain. K765 participates in a covalent cross-link: Glycyl lysine isopeptide (Lys-Gly) (interchain with G-Cter in SUMO2). Residues C784–K821 are disordered. The segment covering S797–A807 has biased composition (basic residues). A compositionally biased stretch (basic and acidic residues) spans N812 to K821. Residues K821, K828, and K847 each participate in a glycyl lysine isopeptide (Lys-Gly) (interchain with G-Cter in SUMO2) cross-link. S872 carries the post-translational modification Phosphoserine. K948 is covalently cross-linked (Glycyl lysine isopeptide (Lys-Gly) (interchain with G-Cter in SUMO2)). Residues S955 and S985 each carry the phosphoserine modification. Residues S976–D998 form a disordered region. The segment covering D981–K990 has biased composition (acidic residues).

As to quaternary structure, interacts with SP1. Interacts with MIS18A. Identified in a complex containing MIS18A, OIP5/MIS18B, MIS18BP1, RBBP7 and RBBP4. Interacts with KAT7/HBO1. Interacts (via N-terminus) with FLNA (via N-terminus).

It localises to the nucleus. Its subcellular location is the chromosome. The protein resides in the centromere. Its function is as follows. Required for recruitment of CENPA to centromeres and normal chromosome segregation during mitosis. In Mus musculus (Mouse), this protein is Mis18-binding protein 1 (Mis18bp1).